Consider the following 102-residue polypeptide: NADH-quinone oxidoreductase subunit K 1 (102 aa).

Helical transmembrane passes span 6–26 (LNAYVALSAVLFALGGIGVLV), 31–51 (LAILMCIELMLNAANLLFVAF), and 65–85 (FLVITVAAAEVAIGLALTVLL).

This sequence belongs to the complex I subunit 4L family. NDH-1 is composed of 14 different subunits. Subunits NuoA, H, J, K, L, M, N constitute the membrane sector of the complex.

It localises to the cell membrane. The catalysed reaction is a quinone + NADH + 5 H(+)(in) = a quinol + NAD(+) + 4 H(+)(out). Its function is as follows. NDH-1 shuttles electrons from NADH, via FMN and iron-sulfur (Fe-S) centers, to quinones in the respiratory chain. The immediate electron acceptor for the enzyme in this species is believed to be a menaquinone. Couples the redox reaction to proton translocation (for every two electrons transferred, four hydrogen ions are translocated across the cytoplasmic membrane), and thus conserves the redox energy in a proton gradient. The protein is NADH-quinone oxidoreductase subunit K 1 of Symbiobacterium thermophilum (strain DSM 24528 / JCM 14929 / IAM 14863 / T).